Here is a 268-residue protein sequence, read N- to C-terminus: Glucosamine-6-phosphate deaminase (268 aa).

Residue D72 is the Proton acceptor; for enolization step of the active site. D141 (for ring-opening step) is an active-site residue. The Proton acceptor; for ring-opening step role is filled by H143. E148 functions as the For ring-opening step in the catalytic mechanism.

It belongs to the glucosamine/galactosamine-6-phosphate isomerase family. NagB subfamily. In terms of assembly, homohexamer.

It catalyses the reaction alpha-D-glucosamine 6-phosphate + H2O = beta-D-fructose 6-phosphate + NH4(+). The protein operates within amino-sugar metabolism; N-acetylneuraminate degradation; D-fructose 6-phosphate from N-acetylneuraminate: step 5/5. With respect to regulation, allosterically activated by N-acetylglucosamine 6-phosphate (GlcNAc6P). Catalyzes the reversible isomerization-deamination of glucosamine 6-phosphate (GlcN6P) to form fructose 6-phosphate (Fru6P) and ammonium ion. This chain is Glucosamine-6-phosphate deaminase, found in Proteus mirabilis (strain HI4320).